A 589-amino-acid chain; its full sequence is Zinc finger protein 703 (589 aa).

The disordered stretch occupies residues 102–315; that stretch reads SQIGKPDPPP…GTGHIAPVSP (214 aa). The span at 113 to 122 shows a compositional bias: low complexity; the sequence is SKLGSLSSSS. Basic and acidic residues predominate over residues 137 to 148; sequence SGEHQNLDDKSS. The span at 179 to 188 shows a compositional bias: polar residues; it reads NGSSSSVTCT. The span at 196–206 shows a compositional bias: low complexity; the sequence is SPRASSPQQTS. Residues 214–230 show a composition bias toward polar residues; it reads QSQSPLSQKTAHLQTTH. Over residues 237–250 the composition is skewed to low complexity; the sequence is GSDPGNDSSSSGSD. The span at 251-262 shows a compositional bias: basic and acidic residues; that stretch reads RNGKKDSDHNKS. The segment covering 272 to 299 has biased composition (low complexity); the sequence is SSHARASVNSSSASSSSSPQPDSKTDSQ. The required for interaction with Groucho and hdac2 plays an important role in repression of transcription stretch occupies residues 408–460; that stretch reads VHDPSSALKSGFPLMYPTHHLHSLHPSSLSSSATSSLSHPLYTYGFMLPNETL. The C2H2-type zinc-finger motif lies at 462–490; it reads HACNWVSVGGPCDKRFATSEELLAHLRTH. Positions 498–589 are required for self-association and nuclear localization; it reads GKLLSGYPSS…LGSASALGYQ (92 aa).

The protein belongs to the Elbow/Noc family. Self-associates. Interacts with nlz2. May interact with Groucho corepressor proteins.

The protein localises to the nucleus. The protein resides in the cytoplasm. Functionally, transcriptional corepressor which does not bind directly to DNA and may regulate transcription through recruitment of histone deacetylases to gene promoters. Required for segmental gene expression during hindbrain development. May regulate cell adhesion, migration and proliferation. The sequence is that of Zinc finger protein 703 (znf703) from Danio rerio (Zebrafish).